A 287-amino-acid chain; its full sequence is 4-hydroxybenzoate octaprenyltransferase (287 aa).

Helical transmembrane passes span 20–40, 43–63, 94–114, 115–135, 137–157, 159–179, 210–230, 235–255, and 266–286; these read IGSL…ADGL, MHVL…GCVI, LGLF…MNTL, TIML…MKRY, HLPQ…AYAA, AGEL…WTIA, IIIG…GHSL, IYYW…RLIG, and FLNN…SVMM.

This sequence belongs to the UbiA prenyltransferase family. Mg(2+) is required as a cofactor.

It is found in the cell inner membrane. It carries out the reaction all-trans-octaprenyl diphosphate + 4-hydroxybenzoate = 4-hydroxy-3-(all-trans-octaprenyl)benzoate + diphosphate. It functions in the pathway cofactor biosynthesis; ubiquinone biosynthesis. Catalyzes the prenylation of para-hydroxybenzoate (PHB) with an all-trans polyprenyl group. Mediates the second step in the final reaction sequence of ubiquinone-8 (UQ-8) biosynthesis, which is the condensation of the polyisoprenoid side chain with PHB, generating the first membrane-bound Q intermediate 3-octaprenyl-4-hydroxybenzoate. The sequence is that of 4-hydroxybenzoate octaprenyltransferase from Photobacterium profundum (strain SS9).